A 471-amino-acid polypeptide reads, in one-letter code: ATP synthase subunit beta (471 aa).

153 to 160 (GGAGVGKT) contributes to the ATP binding site.

It belongs to the ATPase alpha/beta chains family. As to quaternary structure, F-type ATPases have 2 components, CF(1) - the catalytic core - and CF(0) - the membrane proton channel. CF(1) has five subunits: alpha(3), beta(3), gamma(1), delta(1), epsilon(1). CF(0) has four main subunits: a(1), b(1), b'(1) and c(9-12).

It is found in the cell membrane. It catalyses the reaction ATP + H2O + 4 H(+)(in) = ADP + phosphate + 5 H(+)(out). Produces ATP from ADP in the presence of a proton gradient across the membrane. The catalytic sites are hosted primarily by the beta subunits. This Chloroflexus aggregans (strain MD-66 / DSM 9485) protein is ATP synthase subunit beta.